The following is a 372-amino-acid chain: tRNA pseudouridine synthase D (372 aa).

Asp-85 (nucleophile) is an active-site residue. Residues 160-330 (GFANYFGYQR…MQGSRRFMWG (171 aa)) enclose the TRUD domain.

The protein belongs to the pseudouridine synthase TruD family.

The catalysed reaction is uridine(13) in tRNA = pseudouridine(13) in tRNA. Responsible for synthesis of pseudouridine from uracil-13 in transfer RNAs. The polypeptide is tRNA pseudouridine synthase D (Campylobacter jejuni subsp. jejuni serotype O:6 (strain 81116 / NCTC 11828)).